Consider the following 421-residue polypeptide: Testin (421 aa).

The region spanning 92-199 (MILTNPVAAK…GDVKLPRDMN (108 aa)) is the PET domain. 2 disordered regions span residues 133-164 (EKQP…PSKC) and 193-213 (KLPR…GGDR). Positions 155–164 (PAHDQDPSKC) are enriched in basic and acidic residues. 3 LIM zinc-binding domains span residues 234-297 (YSCY…CDSE), 299-359 (PRCA…NHAV), and 362-421 (QGCH…KMMS).

This sequence belongs to the prickle / espinas / testin family. In terms of assembly, interacts via LIM domain 1 with ZYX. Interacts (via LIM domain 3) with ENAH and VASP. Interacts with ALKBH4, talin, actin, alpha-actinin, GRIP1 and PXN. Interacts (via LIM domain 2) with ACTL7A (via N-terminus). Heterodimer with ACTL7A; the heterodimer interacts with ENAH to form a heterotrimer.

It localises to the cytoplasm. It is found in the cell junction. The protein resides in the focal adhesion. In terms of biological role, scaffold protein that may play a role in cell adhesion, cell spreading and in the reorganization of the actin cytoskeleton. Plays a role in the regulation of cell proliferation. May act as a tumor suppressor. The protein is Testin (TES) of Muntiacus muntjak (Barking deer).